Consider the following 231-residue polypeptide: uncharacterized protein (231 aa).

A compositionally biased stretch (basic and acidic residues) spans 1–10 (MDGKKREVEN). Residues 1–35 (MDGKKREVENGKNGNNIKDGNSSNTTNYGKDTKTT) are disordered. Over residues 11–24 (GKNGNNIKDGNSSN) the composition is skewed to low complexity. The segment covering 25-35 (TTNYGKDTKTT) has biased composition (polar residues).

This is an uncharacterized protein from Aquifex aeolicus (strain VF5).